Reading from the N-terminus, the 1485-residue chain is Sex-determining transformer protein 2 (1485 aa).

The N-terminal stretch at 1-28 is a signal peptide; that stretch reads MSLRSNKLLVAAVIFTVVTFGLLLTSSI. 9 helical membrane passes run 438-458, 490-510, 584-604, 732-752, 923-943, 950-970, 980-1000, 1033-1053, and 1063-1083; these read VVYF…FFAW, IELN…NTYL, WPFI…FVDI, GILL…VMLI, LLAS…FSIT, LIFS…ISLF, DSAV…LSLF, AQVF…AGVV, and TVIL…VLVA. The tract at residues 1131 to 1271 is interaction with fem-3; that stretch reads DFHIRPTNMS…MLHMIEKVQK (141 aa). The disordered stretch occupies residues 1143-1175; it reads YAPPPAKKRAKQTNNETDPEKKEDEPGTSNANN. Residues 1181 to 1201 form a helical membrane-spanning segment; the sequence is AAHRLAILPWHFVLGGIPVDL. Disordered regions lie at residues 1228–1252, 1275–1306, and 1348–1384; these read SELE…PAPE, EKEA…PSHR, and EMPP…PPHP. A compositionally biased stretch (basic and acidic residues) spans 1275-1284; sequence EKEAKEKVHQ. An MX regulatory domain; required for tra-1 binding region spans residues 1401 to 1422; it reads CEDVYWTYNDGRLPPNVAMPPR. Residues 1442–1485 form a disordered region; sequence PPGQPSIPIPAEAMALREERARAHREQEQRDNSQSPSPSPEPGL. Residues 1456 to 1472 show a composition bias toward basic and acidic residues; sequence ALREERARAHREQEQRD.

Interacts with tra-1 and fem-3. Somatic and germline tissues.

It is found in the membrane. Plays a major role in controlling sexual cell fates. Promotes female development in XX animals where it sequesters one or more of the FEM proteins to the membrane thereby freeing the tra-1 protein (a putative transcription factor) to enter the nucleus and promote female development. In XO animals it acts as a receptor for her-1 which prevents it from binding to FEM proteins thereby repressing the activity of tra-1. Negatively regulates male development when bound to fem-3 and is required together with tra-1 for promoting spermatogenesis. The protein is Sex-determining transformer protein 2 of Caenorhabditis remanei (Caenorhabditis vulgaris).